We begin with the raw amino-acid sequence, 490 residues long: Actin-related protein 6 (490 aa).

The protein belongs to the actin family. ARP6 subfamily.

It is found in the cytoplasm. Its subcellular location is the cytoskeleton. The polypeptide is Actin-related protein 6 (Dictyostelium discoideum (Social amoeba)).